A 369-amino-acid polypeptide reads, in one-letter code: Peptide chain release factor 2 (369 aa).

At Gln-251 the chain carries N5-methylglutamine.

This sequence belongs to the prokaryotic/mitochondrial release factor family. Post-translationally, methylated by PrmC. Methylation increases the termination efficiency of RF2.

The protein resides in the cytoplasm. Peptide chain release factor 2 directs the termination of translation in response to the peptide chain termination codons UGA and UAA. This Thermotoga maritima (strain ATCC 43589 / DSM 3109 / JCM 10099 / NBRC 100826 / MSB8) protein is Peptide chain release factor 2 (prfB).